A 412-amino-acid polypeptide reads, in one-letter code: Na(+)/H(+) antiporter NhaA 1 (412 aa).

The next 10 membrane-spanning stretches (helical) occupy residues 34 to 54, 75 to 95, 114 to 134, 142 to 162, 183 to 203, 234 to 254, 282 to 302, 309 to 329, 349 to 369, and 379 to 399; these read VGGM…NSPA, LTIG…VAGL, LPVV…FAIG, AAWA…LSLT, LGAI…LALL, WIAV…LGLL, LIVP…EALV, VAIA…FGSS, LSAL…IAEL, and AKAA…VMLL.

This sequence belongs to the NhaA Na(+)/H(+) (TC 2.A.33) antiporter family.

It is found in the cell membrane. It catalyses the reaction Na(+)(in) + 2 H(+)(out) = Na(+)(out) + 2 H(+)(in). In terms of biological role, na(+)/H(+) antiporter that extrudes sodium in exchange for external protons. In Saccharopolyspora erythraea (strain ATCC 11635 / DSM 40517 / JCM 4748 / NBRC 13426 / NCIMB 8594 / NRRL 2338), this protein is Na(+)/H(+) antiporter NhaA 1.